We begin with the raw amino-acid sequence, 210 residues long: Large ribosomal subunit protein uL3 (210 aa).

Residues 125–154 (RHGFRGGPKTHGQSDRHRAPGSIGAGTTPG) form a disordered region.

It belongs to the universal ribosomal protein uL3 family. Part of the 50S ribosomal subunit. Forms a cluster with proteins L14 and L19.

Functionally, one of the primary rRNA binding proteins, it binds directly near the 3'-end of the 23S rRNA, where it nucleates assembly of the 50S subunit. The polypeptide is Large ribosomal subunit protein uL3 (Chloroflexus aggregans (strain MD-66 / DSM 9485)).